The following is a 173-amino-acid chain: MTYFVMFLGFCFILGAVAVASNPSPYYGVLGLVVGSVVGCGWLLSLGVSFISLALFLVYLGGMLVVFVYSVSLAADPYPQAWGSWQVVIYGVGLVLVVLVGIVVGDFVGVWNLWVGTVDYGGLGAVRLDFSGVALFYSWGAGLFLVAGWGLLLTLFVVLELVRGLSRGAIRAV.

The next 5 helical transmembrane spans lie at 1 to 21 (MTYF…AVAS), 27 to 47 (YGVL…LSLG), 48 to 68 (VSFI…VVFV), 87 to 107 (VVIY…VGDF), and 139 to 159 (WGAG…FVVL).

This sequence belongs to the complex I subunit 6 family.

It localises to the mitochondrion membrane. It catalyses the reaction a ubiquinone + NADH + 5 H(+)(in) = a ubiquinol + NAD(+) + 4 H(+)(out). Its function is as follows. Core subunit of the mitochondrial membrane respiratory chain NADH dehydrogenase (Complex I) that is believed to belong to the minimal assembly required for catalysis. Complex I functions in the transfer of electrons from NADH to the respiratory chain. The immediate electron acceptor for the enzyme is believed to be ubiquinone. The sequence is that of NADH-ubiquinone oxidoreductase chain 6 (MT-ND6) from Struthio camelus (Common ostrich).